The sequence spans 397 residues: Aspartate/prephenate aminotransferase (397 aa).

L-aspartate-binding residues include Gly-38, Trp-124, and Asn-174. N6-(pyridoxal phosphate)lysine is present on Lys-238. Residue Arg-375 participates in L-aspartate binding.

Belongs to the class-I pyridoxal-phosphate-dependent aminotransferase family. In terms of assembly, homodimer. Pyridoxal 5'-phosphate serves as cofactor.

It localises to the cytoplasm. It carries out the reaction L-aspartate + 2-oxoglutarate = oxaloacetate + L-glutamate. The catalysed reaction is L-arogenate + 2-oxoglutarate = prephenate + L-glutamate. Functionally, catalyzes the reversible conversion of aspartate and 2-oxoglutarate to glutamate and oxaloacetate. Can also transaminate prephenate in the presence of glutamate, with lower efficiency. The polypeptide is Aspartate/prephenate aminotransferase (Nitrosomonas europaea (strain ATCC 19718 / CIP 103999 / KCTC 2705 / NBRC 14298)).